Reading from the N-terminus, the 519-residue chain is Cytochrome P450 52A13 (519 aa).

Cysteine 466 is a heme binding site.

It belongs to the cytochrome P450 family. Requires heme as cofactor.

Its subcellular location is the membrane. Its function is as follows. Together with an NADPH cytochrome P450 the enzyme system catalyzes the terminal hydroxylation as the first step in the assimilation of alkanes and fatty acids. The polypeptide is Cytochrome P450 52A13 (CYP52A13) (Debaryomyces hansenii (Yeast)).